We begin with the raw amino-acid sequence, 412 residues long: Putative competence-damage inducible protein (412 aa).

This sequence belongs to the CinA family.

This Clostridium perfringens (strain 13 / Type A) protein is Putative competence-damage inducible protein.